We begin with the raw amino-acid sequence, 630 residues long: Protein zwilch homolog (630 aa).

The protein belongs to the ZWILCH family. Component of the RZZ complex composed of rod-1, czw-1 and zwl-1. Interacts with the spindly-like protein spdl-1. Interacts with NDC80 complex component ndc-80.

Its subcellular location is the cytoplasm. It is found in the cell cortex. The protein localises to the chromosome. The protein resides in the centromere. It localises to the kinetochore. Its subcellular location is the cytoskeleton. It is found in the spindle. Essential component of the mitotic checkpoint, which prevents cells from prematurely exiting mitosis. Required for chromosome segregation, the assembly of the dynein-dynactin and mdf-1-mdf-2 complexes onto kinetochores and spindle pole separation. Its function related to the spindle assembly machinery and kinetochore-microtubule attachments likely depends on its association in the mitotic RZZ complex. The RZZ complex recruits the spindly-like protein spdl-1 to kinetochores. To prevent irregular chromosome segregation, the complex also inhibits the attachment of the kinetochore-associated NDC80 complex to microtubules. The recruitment of spdl-1 to kinetochores relieves this inhibition. Required for embryonic development. In Caenorhabditis elegans, this protein is Protein zwilch homolog (zwl-1).